Reading from the N-terminus, the 291-residue chain is Protein pxr1 (291 aa).

Over residues 1-11 (MGLAAPRKRTK) the composition is skewed to basic residues. Disordered regions lie at residues 1-26 (MGLAAPRKRTKISHDPNNTTWSRSTD) and 146-268 (LVPP…FRGR). 2 stretches are compositionally biased toward polar residues: residues 15-25 (DPNNTTWSRST) and 146-156 (LVPPTSQNGQA). Positions 25–79 (TDGFGHRILKAQGWTPGSFLGPRNAAHSDLFTTASASHIRVVLKDDNLGLGARPK) constitute a G-patch domain. Residues 194 to 205 (ETNSRGSREKER) are compositionally biased toward basic and acidic residues. Residues 206 to 219 (KREKRQMRRDKKRK) show a composition bias toward basic residues. Over residues 230–247 (MQEKTRVQGPSEDVKPTE) the composition is skewed to basic and acidic residues.

Belongs to the PINX1 family.

Its subcellular location is the nucleus. The protein resides in the nucleolus. Functionally, involved in rRNA-processing at A0, A1 and A2 sites and negatively regulates telomerase. This is Protein pxr1 (pxr1) from Aspergillus clavatus (strain ATCC 1007 / CBS 513.65 / DSM 816 / NCTC 3887 / NRRL 1 / QM 1276 / 107).